Consider the following 166-residue polypeptide: Large ribosomal subunit protein uL10 (166 aa).

This sequence belongs to the universal ribosomal protein uL10 family. In terms of assembly, part of the ribosomal stalk of the 50S ribosomal subunit. The N-terminus interacts with L11 and the large rRNA to form the base of the stalk. The C-terminus forms an elongated spine to which L12 dimers bind in a sequential fashion forming a multimeric L10(L12)X complex.

Functionally, forms part of the ribosomal stalk, playing a central role in the interaction of the ribosome with GTP-bound translation factors. This is Large ribosomal subunit protein uL10 from Streptococcus uberis (strain ATCC BAA-854 / 0140J).